The chain runs to 428 residues: MSVSKASRTQHSLVPLATLIGRELRSEKVEKPFVKYGQAALAKKGEDYFLIKTDCERVPGDPSSAFSVFGIFDGHNGNSAAIYTKEHLLENVVSAIPQGASRDEWLQALPRALVAGFVKTDIEFQQKGETSGTTVTFVIIDGWTITVASVGDSRCILDTQGGVVSLLTVDHRLEENVEERERITASGGEVGRLNVFGGNEVGPLRCWPGGLCLSRSIGDTDVGEFIVPIPHVKQVKLPDAGGRLIIASDGIWDILSSDVAAKACRGLSADLAAKLVVKEALRTKGLKDDTTCVVVDIVPSGHLSLAPAPMKKQNPFTSFLSRKNHMDTNNKNGNKLSAVGVVEELFEEGSAVLADRLGKDLLSNTETGLLKCAVCQIDESPSEDLSSNGGSIISSASKRWEGPFLCTICKKKKDAMEGKRPSKGSVTT.

The 273-residue stretch at 25-297 (RSEKVEKPFV…DDTTCVVVDI (273 aa)) folds into the PPM-type phosphatase domain. Positions 73, 74, 249, and 288 each coordinate Mn(2+).

It belongs to the PP2C family. It depends on Mg(2+) as a cofactor. Requires Mn(2+) as cofactor.

The catalysed reaction is O-phospho-L-seryl-[protein] + H2O = L-seryl-[protein] + phosphate. It carries out the reaction O-phospho-L-threonyl-[protein] + H2O = L-threonyl-[protein] + phosphate. The polypeptide is Probable protein phosphatase 2C 5 (Arabidopsis thaliana (Mouse-ear cress)).